A 341-amino-acid chain; its full sequence is Long-chain acyl-[acyl-carrier-protein] reductase (341 aa).

Belongs to the short-chain dehydrogenases/reductases (SDR) family. A divalent metal cation is required as a cofactor.

The enzyme catalyses a long-chain fatty aldehyde + holo-[ACP] + NADP(+) = a long-chain fatty acyl-[ACP] + NADPH + H(+). It carries out the reaction a long-chain fatty aldehyde + holo-[ACP] + NAD(+) = a long-chain fatty acyl-[ACP] + NADH + H(+). In terms of biological role, catalyzes the NADP-dependent reduction of long-chain acyl-ACP to the corresponding fatty aldehyde. Involved in the biosynthesis of alkanes, mainly heptadecane and pentadecane, by producing the fatty aldehydes used by aldehyde decarbonylase. This chain is Long-chain acyl-[acyl-carrier-protein] reductase, found in Synechococcus elongatus (strain ATCC 33912 / PCC 7942 / FACHB-805) (Anacystis nidulans R2).